The primary structure comprises 27 residues: NADH-ubiquinone oxidoreductase chain 1 (27 aa).

Residues Leu-3–Phe-23 form a helical membrane-spanning segment.

The protein belongs to the complex I subunit 1 family.

The protein localises to the mitochondrion inner membrane. It carries out the reaction a ubiquinone + NADH + 5 H(+)(in) = a ubiquinol + NAD(+) + 4 H(+)(out). Functionally, core subunit of the mitochondrial membrane respiratory chain NADH dehydrogenase (Complex I) that is believed to belong to the minimal assembly required for catalysis. Complex I functions in the transfer of electrons from NADH to the respiratory chain. The immediate electron acceptor for the enzyme is believed to be ubiquinone. The sequence is that of NADH-ubiquinone oxidoreductase chain 1 (ND1) from Simulium vittatum (Striped black fly).